Consider the following 317-residue polypeptide: Spermidine synthase 2 (317 aa).

One can recognise a PABS domain in the interval 27-264 (PGWFSEISPL…GMIGFMLCST (238 aa)). Gln-58 provides a ligand contact to S-adenosyl 3-(methylsulfanyl)propylamine. Tyr-88 lines the putrescine pocket. Residues Gln-89, Asp-113, Glu-133, 164 to 165 (DG), and Asp-183 contribute to the S-adenosyl 3-(methylsulfanyl)propylamine site. Asp-183 serves as the catalytic Proton acceptor. Putrescine contacts are provided by residues 183–186 (DSSD) and Tyr-252.

Belongs to the spermidine/spermine synthase family.

It catalyses the reaction S-adenosyl 3-(methylsulfanyl)propylamine + putrescine = S-methyl-5'-thioadenosine + spermidine + H(+). It functions in the pathway amine and polyamine biosynthesis; spermidine biosynthesis; spermidine from putrescine: step 1/1. The protein is Spermidine synthase 2 of Datura stramonium (Jimsonweed).